We begin with the raw amino-acid sequence, 294 residues long: uncharacterized protein (294 aa).

Residues 13–151 (QCSQIRPYLY…LIDLEQKLRG (139 aa)) form the Tyrosine-protein phosphatase domain. The Phosphocysteine intermediate role is filled by Cys-95. Residues 234–294 (PTLLVPSSSS…WRLSFHKDVV (61 aa)) form a disordered region.

It belongs to the protein-tyrosine phosphatase family. Non-receptor class dual specificity subfamily.

This is an uncharacterized protein from Caenorhabditis elegans.